The chain runs to 146 residues: Protein new-glue 3 (146 aa).

The N-terminal stretch at 1 to 23 (MRYSCVLLLLATVACLLIPQTGG) is a signal peptide. A disordered region spans residues 23–146 (GSTATTTSTS…RRARSARRLS (124 aa)). Residues 24 to 66 (STATTTSTSASATTTTSASATTTTASDTTTTTAATTTTSSSSS) show a composition bias toward low complexity. 4 repeat units span residues 31-38 (TSASATTT), 39-46 (TSASATTT), 47-53 (TASDTTT), and 54-61 (TTAATTTT). The tract at residues 31-61 (TSASATTTTSASATTTTASDTTTTTAATTTT) is 4 X 8 AA approximate tandem repeats of T-S-A-S-A-T-T-T. The span at 67–92 (KSKKKKRTYHYTRHVYRPKRIRHIYR) shows a compositional bias: basic residues. Positions 93–106 (HKADDDESSTDRTS) are enriched in basic and acidic residues. Positions 116–132 (SSSSSSSGSTSSRSGNS) are enriched in low complexity. Over residues 133-146 (RIRRRRARSARRLS) the composition is skewed to basic residues.

As to expression, salivary gland specific.

It is found in the secreted. This is Protein new-glue 3 (ng3) from Drosophila melanogaster (Fruit fly).